Consider the following 295-residue polypeptide: Ribosomal protein L11 methyltransferase (295 aa).

Thr146, Gly167, Asp189, and Asn231 together coordinate S-adenosyl-L-methionine.

Belongs to the methyltransferase superfamily. PrmA family.

It is found in the cytoplasm. The catalysed reaction is L-lysyl-[protein] + 3 S-adenosyl-L-methionine = N(6),N(6),N(6)-trimethyl-L-lysyl-[protein] + 3 S-adenosyl-L-homocysteine + 3 H(+). In terms of biological role, methylates ribosomal protein L11. This chain is Ribosomal protein L11 methyltransferase, found in Vibrio vulnificus (strain CMCP6).